The primary structure comprises 717 residues: Mitotic spindle assembly checkpoint protein MAD1 (717 aa).

Position 1 is an N-acetylmethionine (Met1). Position 16 is a phosphoserine (Ser16). Residues 46 to 631 are a coiled coil; it reads EQSMQLEERA…QTKIQEFRKV (586 aa). Lys61 carries the N6-acetyllysine; alternate modification. A Glycyl lysine isopeptide (Lys-Gly) (interchain with G-Cter in SUMO2); alternate cross-link involves residue Lys61. The short motif at 79–82 is the Nuclear localization signal element; sequence KRAR. 2 positions are modified to phosphoserine: Ser214 and Ser428. A necessary for interaction with NEK2 region spans residues 380–532; sequence LLEERKKREI…EMQMERLTLQ (153 aa). Residues 540–551 are necessary for interaction with MAD2L1; the sequence is TKVLHMSLNPAS.

It belongs to the MAD1 family. As to quaternary structure, homodimer. Dimerizes via its N- and C- terminal regions. Heterodimerizes with MAD2L1 in order to form a tetrameric MAD1L1-MAD2L1 core complex. Interacts with the closed conformation form of MAD2L1 (C-MAD2) and open conformation form of MAD2L1 (O-MAD2). It is unclear whether MAD1L1 dimerization promotes the conversion of closed to open conformation of MAD2L1. Formation of a heterotetrameric core complex containing two molecules each of MAD1L1 and of MAD2L1 promotes binding of another molecule of MAD2L1 to each MAD2L1, resulting in a heterohexamer. Perturbation of the original MAD1L1-MAD2L1 structure by the spindle checkpoint may decrease MAD2L1 affinity for MAD1L1. CDC20 can compete with MAD1L1 for MAD2L1 binding, until the attachment and/or tension dampen the checkpoint signal, preventing further release of MAD2L1 on to CDC20. Also able to interact with the BUB1/BUB3 complex. Interacts with NEK2. Interacts with TTK. Interacts with TPR; the interactions occurs in a microtubule-independent manner. Interacts with IK. Interacts with the viral Tax protein. Interacts with PRAP1. In terms of processing, phosphorylated; by BUB1. Become hyperphosphorylated in late S through M phases or after mitotic spindle damage.

Its subcellular location is the nucleus. The protein localises to the chromosome. It localises to the centromere. The protein resides in the kinetochore. It is found in the nucleus envelope. Its subcellular location is the cytoplasm. The protein localises to the cytoskeleton. It localises to the microtubule organizing center. The protein resides in the centrosome. It is found in the spindle. Its subcellular location is the spindle pole. In terms of biological role, component of the spindle-assembly checkpoint that prevents the onset of anaphase until all chromosomes are properly aligned at the metaphase plate. Forms a heterotetrameric complex with the closed conformation form of MAD2L1 (C-MAD2) at unattached kinetochores during prometaphase, recruits an open conformation of MAD2L1 (O-MAD2) and promotes the conversion of O-MAD2 to C-MAD2, which ensures mitotic checkpoint signaling. The polypeptide is Mitotic spindle assembly checkpoint protein MAD1 (MAD1L1) (Cricetulus griseus (Chinese hamster)).